We begin with the raw amino-acid sequence, 553 residues long: Solute carrier family 45 member 3 (553 aa).

Helical transmembrane passes span 19-39 (LLIN…ITYV), 52-72 (FMTM…PLLG), 88-108 (FIWA…RAGW), 120-140 (LELA…QVCF), 161-181 (YSVY…LPAI), 198-218 (CLFG…LLVA), 275-295 (FVAE…YTDF), 323-343 (MGSL…LVMD), 353-373 (AVYL…CLSH), 382-402 (AALT…LASL), and 522-542 (AYMV…TQVV).

This sequence belongs to the glycoside-pentoside-hexuronide (GPH) cation symporter transporter (TC 2.A.2) family.

The protein localises to the membrane. It carries out the reaction sucrose(out) + H(+)(out) = sucrose(in) + H(+)(in). Its function is as follows. Proton-associated sucrose transporter. May be able to transport also glucose and fructose. This Macaca fascicularis (Crab-eating macaque) protein is Solute carrier family 45 member 3 (SLC45A3).